The chain runs to 592 residues: Threonine dehydratase biosynthetic, chloroplastic (592 aa).

A chloroplast-targeting transit peptide spans 1–91; that stretch reads MNSVQLPTAQ…NEAENGSIAE (91 aa). N6-(pyridoxal phosphate)lysine is present on Lys-141. 2 consecutive ACT-like domains span residues 419–490 and 512–583; these read AVLA…NLTT and VLCR…LVSD.

Belongs to the serine/threonine dehydratase family. The cofactor is pyridoxal 5'-phosphate.

Its subcellular location is the plastid. The protein localises to the chloroplast. It carries out the reaction L-threonine = 2-oxobutanoate + NH4(+). The protein operates within amino-acid biosynthesis; L-isoleucine biosynthesis; 2-oxobutanoate from L-threonine: step 1/1. With respect to regulation, allosterically inhibited by isoleucine. Strain GM11b is isoleucine feedback insensitive and is resistant to the antimetabolite L-O-methylthreonine. Its function is as follows. Catalyzes the formation of alpha-ketobutyrate from threonine in a two-step reaction. The first step is a dehydration of threonine, followed by rehydration and liberation of ammonia. This chain is Threonine dehydratase biosynthetic, chloroplastic (OMR1), found in Arabidopsis thaliana (Mouse-ear cress).